Consider the following 704-residue polypeptide: Phosphatidylinositol-3,5-bisphosphate 3-phosphatase MTMR8 (704 aa).

A Myotubularin phosphatase domain is found at 126–500 (GWKLIDPISD…YNIQFWCGMY (375 aa)). The a 1,2-diacyl-sn-glycero-3-phospho-(1D-myo-inositol-3,5-bisphosphate) site is built by Asn250, Asn275, and Ile276. A 1,2-diacyl-sn-glycero-3-phospho-(1D-myo-inositol-3-phosphate)-binding residues include Asn250, Asn275, and Ile276. Cys338 (phosphocysteine intermediate) is an active-site residue. A 1,2-diacyl-sn-glycero-3-phospho-(1D-myo-inositol-3,5-bisphosphate) contacts are provided by Ser339, Asp340, Gly341, Trp342, Asp343, Arg344, Lys380, and Arg384. A 1,2-diacyl-sn-glycero-3-phospho-(1D-myo-inositol-3-phosphate) contacts are provided by Ser339, Asp340, Gly341, Trp342, Asp343, and Arg344. Phosphate is bound by residues Ser339 and Asp340. Phosphate is bound by residues Trp342, Asp343, and Arg344. A 1,2-diacyl-sn-glycero-3-phospho-(1D-myo-inositol-3-phosphate) is bound at residue Arg384. Positions 515 to 541 (ESLLEIKKQRAMLETDVHELEKKLKVR) form a coiled coil.

Belongs to the protein-tyrosine phosphatase family. Non-receptor class myotubularin subfamily. Homodimer. Heterodimer with MTMR9.

The protein resides in the nucleus envelope. The catalysed reaction is a 1,2-diacyl-sn-glycero-3-phospho-(1D-myo-inositol-3,5-bisphosphate) + H2O = a 1,2-diacyl-sn-glycero-3-phospho-(1D-myo-inositol-5-phosphate) + phosphate. The enzyme catalyses a 1,2-diacyl-sn-glycero-3-phospho-(1D-myo-inositol-3-phosphate) + H2O = a 1,2-diacyl-sn-glycero-3-phospho-(1D-myo-inositol) + phosphate. It catalyses the reaction 1,2-dioctanoyl-sn-glycero-3-phospho-(1D-myo-inositol-3,5-bisphosphate) + H2O = 1,2-dioctanoyl-sn-glycero-3-phospho-(1D-myo-inositol-5-phosphate) + phosphate. With respect to regulation, interaction with MTMR9 increases phosphatase activity. Functionally, lipid phosphatase that specifically dephosphorylates the D-3 position of phosphatidylinositol 3-phosphate and phosphatidylinositol 3,5-bisphosphate, generating phosphatidylinositol and phosphatidylinositol 5-phosphate. In complex with MTMR9, negatively regulates autophagy. The polypeptide is Phosphatidylinositol-3,5-bisphosphate 3-phosphatase MTMR8 (Homo sapiens (Human)).